The sequence spans 425 residues: Adenosylhomocysteinase (425 aa).

Positions 60, 132, and 157 each coordinate substrate. 158–160 is a binding site for NAD(+); sequence TTT. Substrate is bound by residues lysine 187 and aspartate 191. NAD(+) is bound by residues asparagine 192, 221–226, glutamate 244, asparagine 279, 300–302, and asparagine 347; these read GYGWCG and SGH.

This sequence belongs to the adenosylhomocysteinase family. Requires NAD(+) as cofactor.

It is found in the cytoplasm. It carries out the reaction S-adenosyl-L-homocysteine + H2O = L-homocysteine + adenosine. It functions in the pathway amino-acid biosynthesis; L-homocysteine biosynthesis; L-homocysteine from S-adenosyl-L-homocysteine: step 1/1. Functionally, may play a key role in the regulation of the intracellular concentration of adenosylhomocysteine. The sequence is that of Adenosylhomocysteinase from Synechocystis sp. (strain ATCC 27184 / PCC 6803 / Kazusa).